The sequence spans 874 residues: Probable inorganic carbon transporter subunit DabA (874 aa).

Positions 398, 400, 580, and 595 each coordinate Zn(2+).

The protein belongs to the inorganic carbon transporter (TC 9.A.2) DabA family. As to quaternary structure, forms a complex with DabB. Zn(2+) serves as cofactor.

Its subcellular location is the cell membrane. In terms of biological role, part of an energy-coupled inorganic carbon pump. The protein is Probable inorganic carbon transporter subunit DabA of Bacillus cereus (strain ZK / E33L).